A 581-amino-acid chain; its full sequence is Arginine--tRNA ligase (581 aa).

Residues 126–136 carry the 'HIGH' region motif; it reads PNLAKEMHVGH.

This sequence belongs to the class-I aminoacyl-tRNA synthetase family. In terms of assembly, monomer.

Its subcellular location is the cytoplasm. The catalysed reaction is tRNA(Arg) + L-arginine + ATP = L-arginyl-tRNA(Arg) + AMP + diphosphate. The sequence is that of Arginine--tRNA ligase from Shewanella sediminis (strain HAW-EB3).